The sequence spans 107 residues: Urease subunit beta (107 aa).

It belongs to the urease beta subunit family. Heterotrimer of UreA (gamma), UreB (beta) and UreC (alpha) subunits. Three heterotrimers associate to form the active enzyme.

The protein localises to the cytoplasm. The enzyme catalyses urea + 2 H2O + H(+) = hydrogencarbonate + 2 NH4(+). Its pathway is nitrogen metabolism; urea degradation; CO(2) and NH(3) from urea (urease route): step 1/1. In Teredinibacter turnerae (strain ATCC 39867 / T7901), this protein is Urease subunit beta.